A 102-amino-acid polypeptide reads, in one-letter code: MYAIIVTGGKQYKVEEGASIYVEKLDAKEGDKVTFDQVIFVGGDDTKIGTPVVDGASVEGTVDKQGKEKKVVTFKYKPKKHTHTKQGHRQPYTKVTINKINA.

A compositionally biased stretch (basic residues) spans lysine 77–histidine 88. The segment at lysine 77–alanine 102 is disordered. Over residues threonine 93–alanine 102 the composition is skewed to polar residues.

It belongs to the bacterial ribosomal protein bL21 family. As to quaternary structure, part of the 50S ribosomal subunit. Contacts protein L20.

This protein binds to 23S rRNA in the presence of protein L20. The protein is Large ribosomal subunit protein bL21 of Limosilactobacillus reuteri (strain DSM 20016) (Lactobacillus reuteri).